A 491-amino-acid chain; its full sequence is Probable CtpA-like serine protease (491 aa).

Residues 1–22 (MNDHQKNHATSQDDNTKSTPSK) are disordered. The span at 8–22 (HATSQDDNTKSTPSK) shows a compositional bias: polar residues. Residues 31–51 (LWHFILVILGIILLTSIITVV) traverse the membrane as a helical segment. A PDZ domain is found at 119–201 (TKQFNEGVSG…TYVTLTIKRG (83 aa)). Catalysis depends on charge relay system residues S324, D335, and K349.

Belongs to the peptidase S41A family.

It is found in the cell membrane. In Staphylococcus epidermidis (strain ATCC 12228 / FDA PCI 1200), this protein is Probable CtpA-like serine protease.